Consider the following 143-residue polypeptide: Putative pre-16S rRNA nuclease (143 aa).

The protein belongs to the YqgF nuclease family.

The protein localises to the cytoplasm. Could be a nuclease involved in processing of the 5'-end of pre-16S rRNA. This is Putative pre-16S rRNA nuclease from Marinobacter nauticus (strain ATCC 700491 / DSM 11845 / VT8) (Marinobacter aquaeolei).